The primary structure comprises 276 residues: MRKTDAHILVFDSGIGGLGVADCIRRMLPAATLGYVADTAGFPYGAMSDEALVTRVLTVLEQAIARLRPDMVVIACNTASTLALSALRSRHDLPFIGCVPPLKWAASVSATRQIGLLATPATVDRPYLTALMQEHGQGCTLHAHGARHLAGYAEAVFRGETVLVEAVRAELGILGMIPDIDAVALGCTHYGRLLPWLRQAMPRPVAWLDPAEAVARQAARIAITAAATAAPDSLPRAAPCWAQTVFTTGAVPDEATRQAWAAEGFPEWQPLEIASA.

Substrate contacts are provided by residues 12–13 (DS) and 44–45 (YG). Residue Cys76 is the Proton donor/acceptor of the active site. 77-78 (NT) contributes to the substrate binding site. Cys187 (proton donor/acceptor) is an active-site residue. 188-189 (TH) serves as a coordination point for substrate.

The protein belongs to the aspartate/glutamate racemases family.

It catalyses the reaction L-glutamate = D-glutamate. It participates in cell wall biogenesis; peptidoglycan biosynthesis. Its function is as follows. Provides the (R)-glutamate required for cell wall biosynthesis. The polypeptide is Glutamate racemase (Granulibacter bethesdensis (strain ATCC BAA-1260 / CGDNIH1)).